Here is a 366-residue protein sequence, read N- to C-terminus: tRNA 2-selenouridine synthase (366 aa).

The Rhodanese domain maps to 12-135 (FLNDVPMMDA…MRTFLLDTLH (124 aa)). The S-selanylcysteine intermediate role is filled by cysteine 95.

It belongs to the SelU family. As to quaternary structure, monomer.

It catalyses the reaction 5-methylaminomethyl-2-thiouridine(34) in tRNA + selenophosphate + (2E)-geranyl diphosphate + H2O + H(+) = 5-methylaminomethyl-2-selenouridine(34) in tRNA + (2E)-thiogeraniol + phosphate + diphosphate. The catalysed reaction is 5-methylaminomethyl-2-thiouridine(34) in tRNA + (2E)-geranyl diphosphate = 5-methylaminomethyl-S-(2E)-geranyl-thiouridine(34) in tRNA + diphosphate. It carries out the reaction 5-methylaminomethyl-S-(2E)-geranyl-thiouridine(34) in tRNA + selenophosphate + H(+) = 5-methylaminomethyl-2-(Se-phospho)selenouridine(34) in tRNA + (2E)-thiogeraniol. The enzyme catalyses 5-methylaminomethyl-2-(Se-phospho)selenouridine(34) in tRNA + H2O = 5-methylaminomethyl-2-selenouridine(34) in tRNA + phosphate. Involved in the post-transcriptional modification of the uridine at the wobble position (U34) of tRNA(Lys), tRNA(Glu) and tRNA(Gln). Catalyzes the conversion of 2-thiouridine (S2U-RNA) to 2-selenouridine (Se2U-RNA). Acts in a two-step process involving geranylation of 2-thiouridine (S2U) to S-geranyl-2-thiouridine (geS2U) and subsequent selenation of the latter derivative to 2-selenouridine (Se2U) in the tRNA chain. This is tRNA 2-selenouridine synthase from Pseudomonas savastanoi pv. phaseolicola (strain 1448A / Race 6) (Pseudomonas syringae pv. phaseolicola (strain 1448A / Race 6)).